Here is a 294-residue protein sequence, read N- to C-terminus: Indole-3-glycerol phosphate synthase (294 aa).

The protein belongs to the TrpC family.

The catalysed reaction is 1-(2-carboxyphenylamino)-1-deoxy-D-ribulose 5-phosphate + H(+) = (1S,2R)-1-C-(indol-3-yl)glycerol 3-phosphate + CO2 + H2O. It functions in the pathway amino-acid biosynthesis; L-tryptophan biosynthesis; L-tryptophan from chorismate: step 4/5. The protein is Indole-3-glycerol phosphate synthase of Synechococcus sp. (strain RCC307).